Reading from the N-terminus, the 361-residue chain is Myricetin 3-O-methyltransferase 3 (361 aa).

S-adenosyl-L-methionine is bound at residue aspartate 229. Histidine 267 functions as the Proton acceptor in the catalytic mechanism.

This sequence belongs to the class I-like SAM-binding methyltransferase superfamily. Cation-independent O-methyltransferase family. In terms of assembly, homodimer. As to expression, mainly expressed in leaves secreting glandular trichomes types 1 and 4 and, to a lesser extent, in storage trichomes type 6.

It catalyses the reaction kaempferol + S-adenosyl-L-methionine = 3-O-methylkaempferol + S-adenosyl-L-homocysteine + H(+). It carries out the reaction quercetin + S-adenosyl-L-methionine = 3',4',5,7-tetrahydroxy-3-methoxyflavone + S-adenosyl-L-homocysteine + H(+). The catalysed reaction is myricetin + S-adenosyl-L-methionine = 3-O-methylmyricetin + S-adenosyl-L-homocysteine + H(+). The enzyme catalyses kaempferide + S-adenosyl-L-methionine = 3,4'-O-dimethylkaempferol + S-adenosyl-L-homocysteine + H(+). It catalyses the reaction isorhamnetin + S-adenosyl-L-methionine = 3,3'-O-dimethylquercetin + S-adenosyl-L-homocysteine + H(+). It carries out the reaction rhamnetin + S-adenosyl-L-methionine = 3',4',5-trihydroxy-3,7-dimethoxyflavone + S-adenosyl-L-homocysteine + H(+). The catalysed reaction is laricitrin + S-adenosyl-L-methionine = 3,3'-O-dimethylmyricetin + S-adenosyl-L-homocysteine + H(+). The enzyme catalyses syringetin + S-adenosyl-L-methionine = 3,3',5'-O-trimethylmyricetin + S-adenosyl-L-homocysteine + H(+). It functions in the pathway flavonoid metabolism. Functionally, flavonoid 3-O-methyltransferase involved in the biosynthesis of polymethoxylated flavonoids natural products such as myricetin derivatives, aroma compounds possessing antioxidant properties and exhibiting pharmacological activities such as anti-carcinogen, anti-viral, anti-thrombotic, anti-diabetic, anti-atherosclerotic, and anti-inflammatory effects. Catalyzes S-adenosylmethionine-dependent regioselective 3-O-methylation of flavonoids; active on various hydroxylated flavonoid substrates. Active with myricetin, quercetin, kaempferol, 4'-methyl kaempferol (kaempferide), 3'-methyl quercetin (isorhamnetin), 7-methyl quercetin (rhamnetin), 3'-methyl myricetin (laricitrin) and 3',5'-dimethyl myricetin (syringetin), thus producing 3-methyl myricetin, 3-methyl quercetin, 3-methyl kaempferol, 4',3-methyl kaempferol, 3',3-methyl quercetin, 7,3-dimethyl quercetin, 3',3-dimethyl myricetin and 3',5',3-dimethyl myricetin, respectively. Inactive with flavonol substrates methylated at the 3-hydroxyl position such as 3-O-methyl quercetin. The chain is Myricetin 3-O-methyltransferase 3 from Solanum habrochaites (Wild tomato).